The following is a 152-amino-acid chain: Transcriptional repressor NrdR (152 aa).

The disordered stretch occupies residues 1–21 (MRCPFCGNGDTQVKDSRPTED). The segment at 3-34 (CPFCGNGDTQVKDSRPTEDSAAIRRRRFCPAC) is a zinc-finger region. Over residues 12 to 21 (QVKDSRPTED) the composition is skewed to basic and acidic residues. Residues 49–139 (LVIVKKDGQR…VYRNFREAKD (91 aa)) form the ATP-cone domain.

It belongs to the NrdR family. Requires Zn(2+) as cofactor.

Negatively regulates transcription of bacterial ribonucleotide reductase nrd genes and operons by binding to NrdR-boxes. This chain is Transcriptional repressor NrdR, found in Rhodospirillum rubrum (strain ATCC 11170 / ATH 1.1.1 / DSM 467 / LMG 4362 / NCIMB 8255 / S1).